The sequence spans 407 residues: MGIIVQKFGGTSVGSIERIQHVANRVIEEVQKGNDVVVVVSAMGKTTDELVNLAKQISNHPSKREMDMLLSTGEQVSIALLAMSLHEKGYKAVSLTGWQAGITTEEMHGNARIMNIDTTRIRRCLDEGAIVIVAGFQGVTETGEITTLGRGGSDTTAVALAAALKAEKCDIYTDVTGVFTTDPRYVKTARKIKEISYDEMLELANLGAGVLHPRAVEFAKNYEVPLEVRSSMENERGTMVKEEVSMEQHLIVRGIAFEDQVTRVTVVGIEKYLQSVATIFTALANRGINVDIIIQNATNSETASVSFSIRTEDLPETLQVLQALEGADVHYESGLAKVSIVGSGMISNPGVAARVFEVLADQGIEIKMVSISEIKISTVIDEKYMVSAVEELHEAFGLAEEAAAVRS.

7–10 lines the ATP pocket; it reads KFGG. Residue 25 to 30 participates in substrate binding; that stretch reads RVIEEV. Serine 41 serves as a coordination point for ATP. Residues 47-49, glutamate 74, 125-126, 150-153, and serine 153 contribute to the substrate site; these read TDE, LD, and RGGS. ATP-binding positions include 173–174 and 179–184; these read TD and FTTDPR. ACT domains follow at residues 264-338 and 340-407; these read VTVV…LAKV and IVGS…AVRS. Substrate contacts are provided by residues 289-291, glutamine 295, 351-352, 365-366, and 372-373; these read NVD, VA, EI, and SE.

This sequence belongs to the aspartokinase family. In terms of assembly, tetramer consisting of 2 isoforms Alpha (catalytic and regulation) and of a homodimer of 2 isoforms Beta (regulation).

It catalyses the reaction L-aspartate + ATP = 4-phospho-L-aspartate + ADP. It participates in amino-acid biosynthesis; L-lysine biosynthesis via DAP pathway; (S)-tetrahydrodipicolinate from L-aspartate: step 1/4. Its pathway is amino-acid biosynthesis; L-methionine biosynthesis via de novo pathway; L-homoserine from L-aspartate: step 1/3. The protein operates within amino-acid biosynthesis; L-threonine biosynthesis; L-threonine from L-aspartate: step 1/5. Lysine-sensitive. Catalyzes the phosphorylation of the beta-carboxyl group of aspartic acid with ATP to yield 4-phospho-L-aspartate, which is involved in the branched biosynthetic pathway leading to the biosynthesis of amino acids threonine, isoleucine and methionine. The chain is Aspartokinase (lysC) from Geobacillus stearothermophilus (Bacillus stearothermophilus).